Reading from the N-terminus, the 187-residue chain is V-type ATP synthase subunit E (187 aa).

This sequence belongs to the V-ATPase E subunit family.

Produces ATP from ADP in the presence of a proton gradient across the membrane. The sequence is that of V-type ATP synthase subunit E from Clostridioides difficile (strain 630) (Peptoclostridium difficile).